Reading from the N-terminus, the 133-residue chain is Nodulation protein K (133 aa).

The polypeptide is Nodulation protein K (nodK) (Bradyrhizobium elkanii).